The chain runs to 799 residues: Cadherin-8 (799 aa).

The N-terminal stretch at 1-29 (MPERLAETLLDLWTPLIILWITLPSFVYM) is a signal peptide. The propeptide occupies 30–61 (APMNQAHVLTTGSPLELSRQSEEMRILNRSKR). Cadherin domains lie at 62-167 (GWVW…APEF), 168-276 (LNGP…PPKF), 277-391 (AQSL…PPVF), 392-494 (SSPT…DNAP), and 495-616 (EFAS…YVLP). The Extracellular portion of the chain corresponds to 62-621 (GWVWNQMFVL…PYVLPIGLSM (560 aa)). An N-linked (GlcNAc...) asparagine glycan is attached at Asn188. N-linked (GlcNAc...) asparagine glycans are attached at residues Asn463, Asn473, and Asn544. Residues 622 to 642 (GALIAILACIILLLVIVVLFV) traverse the membrane as a helical segment. The Cytoplasmic segment spans residues 643–799 (TLRRHKNEPL…YSVGESDKET (157 aa)). The residue at position 795 (Ser795) is a Phosphoserine.

It is found in the cell membrane. Its function is as follows. Cadherins are calcium-dependent cell adhesion proteins. They preferentially interact with themselves in a homophilic manner in connecting cells; cadherins may thus contribute to the sorting of heterogeneous cell types. The polypeptide is Cadherin-8 (Cdh8) (Rattus norvegicus (Rat)).